The primary structure comprises 80 residues: Small ribosomal subunit protein uS17 (80 aa).

Belongs to the universal ribosomal protein uS17 family. In terms of assembly, part of the 30S ribosomal subunit.

Functionally, one of the primary rRNA binding proteins, it binds specifically to the 5'-end of 16S ribosomal RNA. This is Small ribosomal subunit protein uS17 from Cereibacter sphaeroides (strain ATCC 17025 / ATH 2.4.3) (Rhodobacter sphaeroides).